A 272-amino-acid chain; its full sequence is 2-succinyl-6-hydroxy-2,4-cyclohexadiene-1-carboxylate synthase (272 aa).

This sequence belongs to the AB hydrolase superfamily. MenH family. Monomer.

The enzyme catalyses 5-enolpyruvoyl-6-hydroxy-2-succinyl-cyclohex-3-ene-1-carboxylate = (1R,6R)-6-hydroxy-2-succinyl-cyclohexa-2,4-diene-1-carboxylate + pyruvate. It participates in quinol/quinone metabolism; 1,4-dihydroxy-2-naphthoate biosynthesis; 1,4-dihydroxy-2-naphthoate from chorismate: step 3/7. It functions in the pathway quinol/quinone metabolism; menaquinone biosynthesis. Catalyzes a proton abstraction reaction that results in 2,5-elimination of pyruvate from 2-succinyl-5-enolpyruvyl-6-hydroxy-3-cyclohexene-1-carboxylate (SEPHCHC) and the formation of 2-succinyl-6-hydroxy-2,4-cyclohexadiene-1-carboxylate (SHCHC). This Yersinia pseudotuberculosis serotype O:1b (strain IP 31758) protein is 2-succinyl-6-hydroxy-2,4-cyclohexadiene-1-carboxylate synthase.